The following is a 338-amino-acid chain: tRNA N6-adenosine threonylcarbamoyltransferase (338 aa).

Fe cation is bound by residues histidine 110 and histidine 114. Substrate contacts are provided by residues 132–136 (ILSGG), aspartate 165, glycine 178, and asparagine 274. Aspartate 298 is a Fe cation binding site.

The protein belongs to the KAE1 / TsaD family. Requires Fe(2+) as cofactor.

It is found in the cytoplasm. The enzyme catalyses L-threonylcarbamoyladenylate + adenosine(37) in tRNA = N(6)-L-threonylcarbamoyladenosine(37) in tRNA + AMP + H(+). Required for the formation of a threonylcarbamoyl group on adenosine at position 37 (t(6)A37) in tRNAs that read codons beginning with adenine. Is involved in the transfer of the threonylcarbamoyl moiety of threonylcarbamoyl-AMP (TC-AMP) to the N6 group of A37, together with TsaE and TsaB. TsaD likely plays a direct catalytic role in this reaction. The chain is tRNA N6-adenosine threonylcarbamoyltransferase from Borrelia hermsii (strain HS1 / DAH).